The sequence spans 214 residues: Calcineurin B-like protein 8 (214 aa).

EF-hand domains follow at residues 35–70, 71–106, 108–143, and 152–187; these read EIEA…RNGS, MQNL…FHPY, PEHE…LLGE, and SIEA…NPSI. Ca(2+)-binding residues include Asp-165, Asn-167, Asp-169, Lys-171, and Glu-176. Residue Ser-205 is modified to Phosphoserine.

This sequence belongs to the calcineurin regulatory subunit family. As to quaternary structure, interacts with CIPK23. Interacts with CIPK14 at the cell membrane exclusively.

It is found in the cytoplasm. Its subcellular location is the nucleus. The protein resides in the cell membrane. Its function is as follows. Acts as a calcium sensor. CBL proteins interact with CIPK serine-threonine protein kinases. Binding of a CBL protein to the regulatory NAF domain of a CIPK protein lead to the activation of the kinase in a calcium-dependent manner. In Arabidopsis thaliana (Mouse-ear cress), this protein is Calcineurin B-like protein 8 (CBL8).